A 360-amino-acid chain; its full sequence is Probable butyrate kinase (360 aa).

It belongs to the acetokinase family.

It is found in the cytoplasm. The catalysed reaction is butanoate + ATP = butanoyl phosphate + ADP. The chain is Probable butyrate kinase from Enterococcus faecalis (strain ATCC 700802 / V583).